The primary structure comprises 397 residues: Argininosuccinate synthase (397 aa).

Position 8–16 (alanine 8–serine 16) interacts with ATP. Tyrosine 87 provides a ligand contact to L-citrulline. Position 117 (glycine 117) interacts with ATP. L-aspartate contacts are provided by threonine 119, asparagine 123, and aspartate 124. Position 123 (asparagine 123) interacts with L-citrulline. 4 residues coordinate L-citrulline: arginine 127, serine 175, glutamate 259, and tyrosine 271.

The protein belongs to the argininosuccinate synthase family. Type 1 subfamily. As to quaternary structure, homotetramer.

It is found in the cytoplasm. It catalyses the reaction L-citrulline + L-aspartate + ATP = 2-(N(omega)-L-arginino)succinate + AMP + diphosphate + H(+). Its pathway is amino-acid biosynthesis; L-arginine biosynthesis; L-arginine from L-ornithine and carbamoyl phosphate: step 2/3. The sequence is that of Argininosuccinate synthase from Streptomyces griseus subsp. griseus (strain JCM 4626 / CBS 651.72 / NBRC 13350 / KCC S-0626 / ISP 5235).